We begin with the raw amino-acid sequence, 278 residues long: Release factor glutamine methyltransferase (278 aa).

Residues 116–120, Asp139, Trp168, and Asn182 contribute to the S-adenosyl-L-methionine site; that span reads GTGTG. 182–185 contacts substrate; the sequence is NPPY.

It belongs to the protein N5-glutamine methyltransferase family. PrmC subfamily.

The catalysed reaction is L-glutaminyl-[peptide chain release factor] + S-adenosyl-L-methionine = N(5)-methyl-L-glutaminyl-[peptide chain release factor] + S-adenosyl-L-homocysteine + H(+). Functionally, methylates the class 1 translation termination release factors RF1/PrfA and RF2/PrfB on the glutamine residue of the universally conserved GGQ motif. In Cereibacter sphaeroides (strain ATCC 17023 / DSM 158 / JCM 6121 / CCUG 31486 / LMG 2827 / NBRC 12203 / NCIMB 8253 / ATH 2.4.1.) (Rhodobacter sphaeroides), this protein is Release factor glutamine methyltransferase.